The following is a 699-amino-acid chain: D-(-)-3-hydroxybutyrate oligomer hydrolase (699 aa).

The N-terminal stretch at 1–33 (MTAIRGGSRRAPGLALALLGGVLLGACHGDENA) is a signal peptide. The active-site Charge relay system is Ser311.

The protein belongs to the D-(-)-3-hydroxybutyrate oligomer hydrolase family.

It is found in the secreted. It catalyses the reaction (3R)-hydroxybutanoate dimer + H2O = 2 (R)-3-hydroxybutanoate + H(+). Its pathway is lipid metabolism; butanoate metabolism. In terms of biological role, participates in the degradation of poly-3-hydroxybutyrate (PHB). It works downstream of poly(3-hydroxybutyrate) depolymerase, hydrolyzing D(-)-3-hydroxybutyrate oligomers of various length (3HB-oligomers) into 3HB-monomers. The chain is D-(-)-3-hydroxybutyrate oligomer hydrolase from Burkholderia pseudomallei (strain 1710b).